The primary structure comprises 145 residues: Cytochrome b (145 aa).

A helical membrane pass occupies residues 38-58 (FFALHFLLPFVLAALALMHLI). 2 residues coordinate heme b: H42 and H56. H61 is a binding site for a ubiquinone. A helical transmembrane segment spans residues 85–105 (FIFKDLVTIFIFFIVLSIFVF).

It belongs to the cytochrome b family. As to quaternary structure, fungal cytochrome b-c1 complex contains 10 subunits; 3 respiratory subunits, 2 core proteins and 5 low-molecular weight proteins. Cytochrome b-c1 complex is a homodimer. It depends on heme b as a cofactor.

Its subcellular location is the mitochondrion inner membrane. Its function is as follows. Component of the ubiquinol-cytochrome c reductase complex (complex III or cytochrome b-c1 complex) that is part of the mitochondrial respiratory chain. The b-c1 complex mediates electron transfer from ubiquinol to cytochrome c. Contributes to the generation of a proton gradient across the mitochondrial membrane that is then used for ATP synthesis. The sequence is that of Cytochrome b (cob) from Aspergillus flavus.